The primary structure comprises 389 residues: Arrestin-C (389 aa).

It belongs to the arrestin family. Retina and pineal gland.

May play a role in an as yet undefined retina-specific signal transduction. Could bind to photoactivated-phosphorylated red/green opsins. The sequence is that of Arrestin-C (arr3) from Aquarana catesbeiana (American bullfrog).